A 37-amino-acid polypeptide reads, in one-letter code: U10-ctenitoxin-Co1a (37 aa).

Disulfide bonds link Cys2–Cys17, Cys9–Cys22, Cys16–Cys33, and Cys24–Cys31.

As to expression, expressed by the venom gland.

It localises to the secreted. Antagonist of L-type calcium channels (Cav1/CACNA1). This is U10-ctenitoxin-Co1a from Ctenus ornatus (Brazilian spider).